We begin with the raw amino-acid sequence, 1357 residues long: DNA-directed RNA polymerase subunit beta (1357 aa).

Belongs to the RNA polymerase beta chain family. In terms of assembly, the RNAP catalytic core consists of 2 alpha, 1 beta, 1 beta' and 1 omega subunit. When a sigma factor is associated with the core the holoenzyme is formed, which can initiate transcription.

It carries out the reaction RNA(n) + a ribonucleoside 5'-triphosphate = RNA(n+1) + diphosphate. Functionally, DNA-dependent RNA polymerase catalyzes the transcription of DNA into RNA using the four ribonucleoside triphosphates as substrates. The chain is DNA-directed RNA polymerase subunit beta from Nitrosospira multiformis (strain ATCC 25196 / NCIMB 11849 / C 71).